A 317-amino-acid chain; its full sequence is Melanocyte-stimulating hormone receptor (317 aa).

Over 1–37 (MRVQGSQRRLLGSLNSTPTATPHLGLAANQTGARCLE) the chain is Extracellular. N-linked (GlcNAc...) asparagine glycosylation occurs at N29. The helical transmembrane segment at 38-63 (VSIPDGLFLSLGLVSLVENVLVVTAI) threads the bilayer. Residues 64-72 (AKNRNLHSP) lie on the Cytoplasmic side of the membrane. A helical transmembrane segment spans residues 73–93 (MYCFICCLALSDLLVSGSNML). At 94–118 (ETAVTLLLEAGALAARAAVVQQLDN) the chain is on the extracellular side. Residues 119 to 140 (VIDVITCSSMLSSLCFLGAIAV) traverse the membrane as a helical segment. Topologically, residues 141–163 (DRYISIFYALRYHSIVTLPRARR) are cytoplasmic. The helical transmembrane segment at 164–183 (AIAAIWVASVLCSTLFIAYY) threads the bilayer. The Extracellular segment spans residues 184 to 191 (DHAAVLLC). A helical transmembrane segment spans residues 192–211 (LVVFFLAMLVLMAVLYVHML). Residues 212 to 240 (ARACQHAQGIARLHKRQRLAHQGFGLKGA) lie on the Cytoplasmic side of the membrane. The helical transmembrane segment at 241 to 266 (ATLTILLGIFFLCWGPFFLHLTLIVL) threads the bilayer. Residues 267–279 (CPQHPTCSCIFKN) are Extracellular-facing. A helical transmembrane segment spans residues 280-300 (FNLFLALIICNAIIDPLIYAF). Residues 301–317 (RSQELRRTLKEVLLCSW) are Cytoplasmic-facing. A lipid anchor (S-palmitoyl cysteine) is attached at C315.

It belongs to the G-protein coupled receptor 1 family. In terms of assembly, interacts with MGRN1, but does not undergo MGRN1-mediated ubiquitination; this interaction competes with GNAS-binding and thus inhibits agonist-induced cAMP production. Interacts with OPN3; the interaction results in a decrease in MC1R-mediated cAMP signaling and ultimately a decrease in melanin production in melanocytes.

The protein localises to the cell membrane. Its function is as follows. Receptor for MSH (alpha, beta and gamma) and ACTH. The activity of this receptor is mediated by G proteins which activate adenylate cyclase. Mediates melanogenesis, the production of eumelanin (black/brown) and phaeomelanin (red/yellow), via regulation of cAMP signaling in melanocytes. In Macaca nigra (Celebes black macaque), this protein is Melanocyte-stimulating hormone receptor (MC1R).